The sequence spans 493 residues: Cysteine--tRNA ligase (493 aa).

C29 contributes to the Zn(2+) binding site. Residues 31–41 carry the 'HIGH' region motif; the sequence is VTVYDLSHIGH. Zn(2+)-binding residues include C209, H234, and E238. The 'KMSKS' region signature appears at 266-270; it reads KMSKS. K269 serves as a coordination point for ATP.

It belongs to the class-I aminoacyl-tRNA synthetase family. As to quaternary structure, monomer. Zn(2+) is required as a cofactor.

The protein resides in the cytoplasm. It carries out the reaction tRNA(Cys) + L-cysteine + ATP = L-cysteinyl-tRNA(Cys) + AMP + diphosphate. The protein is Cysteine--tRNA ligase of Syntrophobacter fumaroxidans (strain DSM 10017 / MPOB).